The following is a 224-amino-acid chain: Ribose-5-phosphate isomerase A (224 aa).

Substrate-binding positions include 26 to 29 (TGST), 81 to 84 (DGAD), and 94 to 97 (KGGG). The Proton acceptor role is filled by E103. Substrate is bound at residue K121.

Belongs to the ribose 5-phosphate isomerase family. In terms of assembly, homodimer.

The enzyme catalyses aldehydo-D-ribose 5-phosphate = D-ribulose 5-phosphate. Its pathway is carbohydrate degradation; pentose phosphate pathway; D-ribose 5-phosphate from D-ribulose 5-phosphate (non-oxidative stage): step 1/1. Its function is as follows. Catalyzes the reversible conversion of ribose-5-phosphate to ribulose 5-phosphate. The polypeptide is Ribose-5-phosphate isomerase A (Listeria monocytogenes serotype 4b (strain F2365)).